A 70-amino-acid chain; its full sequence is Insulin (70 aa).

Disulfide bonds link Cys-7–Cys-56, Cys-19–Cys-69, and Cys-55–Cys-60. Positions 33-49 (FVDSLAGYSKHQNGGIS) are cleaved as a propeptide — c peptide.

The protein belongs to the insulin family. In terms of assembly, heterodimer of a B chain and an A chain linked by two disulfide bonds.

The protein resides in the secreted. Functionally, insulin decreases blood glucose concentration. It increases cell permeability to monosaccharides, amino acids and fatty acids. It accelerates glycolysis, the pentose phosphate cycle, and glycogen synthesis in liver. This chain is Insulin (ins), found in Torpedo marmorata (Marbled electric ray).